The chain runs to 54 residues: Small ribosomal subunit protein uS14 (54 aa).

Cysteine 19, cysteine 22, cysteine 37, and cysteine 40 together coordinate Zn(2+).

It belongs to the universal ribosomal protein uS14 family. Zinc-binding uS14 subfamily. Part of the 30S ribosomal subunit. Zn(2+) serves as cofactor.

Functionally, binds 16S rRNA, required for the assembly of 30S particles. This Pyrobaculum aerophilum (strain ATCC 51768 / DSM 7523 / JCM 9630 / CIP 104966 / NBRC 100827 / IM2) protein is Small ribosomal subunit protein uS14.